The sequence spans 520 residues: Type I restriction enzyme EcoprrI methylase subunit (520 aa).

Residues 198-203 (EFFTPQ), 230-232 (SGS), and Glu254 each bind S-adenosyl-L-methionine.

This sequence belongs to the N(4)/N(6)-methyltransferase family. The type I restriction/modification system is composed of three polypeptides R, M and S; the restriction enzyme has stoichiometry R(2)M(2)S(1) while the methyltransferase is M(2)S(1).

It catalyses the reaction a 2'-deoxyadenosine in DNA + S-adenosyl-L-methionine = an N(6)-methyl-2'-deoxyadenosine in DNA + S-adenosyl-L-homocysteine + H(+). In terms of biological role, the subtype gamma methyltransferase (M) subunit of a type I restriction enzyme. The M and S subunits together form a methyltransferase (MTase) that methylates two adenine residues of the sequence 5'-CCAN(7)ATGC-3'. In the presence of the R subunit the complex can also act as an endonuclease, binding to the same target sequence but cutting the DNA some distance from this site. Whether the DNA is cut or modified depends on the methylation state of the target sequence. When the target site is unmodified, the DNA is cut. When the target site is hemimethylated, the complex acts as a maintenance MTase modifying the DNA so that both strands become methylated. After locating a non-methylated recognition site, the enzyme complex serves as a molecular motor that translocates DNA in an ATP-dependent manner until a collision occurs that triggers cleavage. This Escherichia coli protein is Type I restriction enzyme EcoprrI methylase subunit.